We begin with the raw amino-acid sequence, 307 residues long: Undecaprenyl-diphosphatase (307 aa).

The next 6 helical transmembrane spans lie at 40–60 (AAKT…VVYF), 79–99 (LRLA…GLLF), 107–127 (LFGP…MIGV), 183–203 (AAAA…ATVF), 219–239 (IVAL…VIAV), and 249–269 (LAPF…LWIA).

It belongs to the UppP family.

The protein resides in the cell inner membrane. The enzyme catalyses di-trans,octa-cis-undecaprenyl diphosphate + H2O = di-trans,octa-cis-undecaprenyl phosphate + phosphate + H(+). Catalyzes the dephosphorylation of undecaprenyl diphosphate (UPP). Confers resistance to bacitracin. The chain is Undecaprenyl-diphosphatase from Sorangium cellulosum (strain So ce56) (Polyangium cellulosum (strain So ce56)).